Here is a 1779-residue protein sequence, read N- to C-terminus: Fibronectin type III domain-containing protein 1 (1779 aa).

The signal sequence occupies residues 1–29 (MAPEARASPRLLLRAALLLLAALLPVASS). 4 Fibronectin type-III domains span residues 33 to 126 (PVDH…KAPR), 103 to 203 (PNKP…AEED), 207 to 302 (VPED…TPES), and 307 to 402 (APEN…IPTT). Residues 400–413 (PTTSSTEASVQPNG) are compositionally biased toward polar residues. Disordered regions lie at residues 400–442 (PTTS…MPPA), 459–1108 (NGVA…RNLD), 1120–1227 (EENT…KPNG), and 1330–1401 (PTTT…PPGT). Over residues 423 to 437 (QQPSSSAPKVAASSQ) the composition is skewed to low complexity. Positions 493 to 506 (NPRSSRLETLNQKQ) are enriched in polar residues. Basic and acidic residues predominate over residues 534-554 (SRKEGMDRRGPSLDPHPHPRV). Polar residues-rich tracts occupy residues 557–570 (SASS…STDN) and 590–607 (SSGS…TSAP). Residues 629–640 (ASSSTSRQSHSS) show a composition bias toward low complexity. Phosphoserine is present on S651. Low complexity predominate over residues 676–694 (HASSSHTTSRTASSSHPSA). S699 carries the phosphoserine modification. Basic and acidic residues predominate over residues 707-720 (DSDRAAEDTIRRAE). Polar residues-rich tracts occupy residues 763–784 (PSVS…SLPA) and 861–875 (PLSS…STTD). Residues 879 to 904 (PQTSPASTSRQPSPARPPASRSQPSP) show a composition bias toward low complexity. 2 stretches are compositionally biased toward polar residues: residues 957-971 (APQN…TYED) and 1003-1020 (VGSQ…SQAG). Residues 1085–1097 (LSTSVKKWPSSSS) show a composition bias toward low complexity. Over residues 1098 to 1108 (PRDKYADRNLD) the composition is skewed to basic and acidic residues. 2 stretches are compositionally biased toward polar residues: residues 1147 to 1159 (NPAT…NTHS) and 1166 to 1177 (RAPSSYSSTTPM). Residues 1330–1389 (PTTTMPPSTTTTTVPPTTTLPPTTTTTRRTTTTRRTTTTRRPTTTTRATRRTTTTTTTPE) show a composition bias toward low complexity. The region spanning 1543–1637 (APRNITVVAM…PSVSFVTESD (95 aa)) is the Fibronectin type-III 5 domain. Residue N1546 is glycosylated (N-linked (GlcNAc...) asparagine).

The protein resides in the secreted. Its function is as follows. May be an activator of G protein signaling. In Rattus norvegicus (Rat), this protein is Fibronectin type III domain-containing protein 1 (Fndc1).